Here is a 708-residue protein sequence, read N- to C-terminus: MEVNHQSNDLGLVALKMLAQYHNIPLNPEEIKHKFDIEGKGLTLTSWLLAAKSLELKAKHIKKEISRLHLVNLPALVWQDNGKHFLLVKIDTDKKRYLTYNLEQDAPKILSQEEFESCYQGKIILVTSRASIVGQLAKFDFTWFIPAVIKYRKIFLETLLVSIFLQIFALITPLFFQVVMDKVLVHRGFSTLNIITVALAIVIIFEIVLSGLRTYIFAHSTSRIDVELGARLFRHLLALPISYFENRRVGDTVARVRELDQIRNFLTGQALTSVLDLLFSFIFFAVMWYYSPKLTLVILGSLPCYILWSIFISPILRRRLDDKFARGADNQAFLVESVTAINMIKAMAVSPQMTDTWDKQLASYVSSSFRVTVLATIGQQGVQLIQKTVMVINLWLGAHLVISGDLSIGQLIAFNMLSGQVIAPVIRLAQLWQDFTQVGISVTRLGDVLNSPTEQYQGKLSLPEIQGDIAFKNIRFRYKPDAPTILNNVNLEIKKGEVIGIVGRSGSGKSTLTKLLQRFYIPENGQVLIDGHDLALADPNWLRRQIGVVLQDNVLLNRSIRENIALSEPGMSMERVIYAAKLAGAHDFISDVREGYNTIVGEQGAGLSGGQRQRIAIARALVNNPKILIFDEATSALDYESEHIIMQNMQKICQGRTVILIAHRLSTVKNADRIIVMEKGEIVEQGKHNELLQNNNGLYSYLHQLQLN.

The region spanning 1 to 126 is the Peptidase C39 domain; it reads MEVNHQSNDL…SCYQGKIILV (126 aa). Residues 155–437 enclose the ABC transmembrane type-1 domain; sequence FLETLLVSIF…LAQLWQDFTQ (283 aa). 5 consecutive transmembrane segments (helical) span residues 159 to 179, 192 to 212, 270 to 290, 296 to 316, and 389 to 409; these read LLVS…FQVV, LNII…LSGL, ALTS…MWYY, LVIL…SPIL, and VMVI…LSIG. Residues 469–704 form the ABC transporter domain; the sequence is IAFKNIRFRY…NNGLYSYLHQ (236 aa). Position 503–510 (503–510) interacts with ATP; that stretch reads GRSGSGKS.

It belongs to the ABC transporter superfamily. Protein-1 exporter (TC 3.A.1.109) family. In terms of assembly, homodimer.

It localises to the cell inner membrane. The enzyme catalyses ATP + H2O + proteinSide 1 = ADP + phosphate + proteinSide 2.. Its function is as follows. Part of the ABC transporter complex LktBD involved in leukotoxin export. Transmembrane domains (TMD) form a pore in the inner membrane and the ATP-binding domain (NBD) is responsible for energy generation. The protein is Leukotoxin translocation ATP-binding protein LktB (lktB) of Pasteurella haemolytica-like sp. (strain 5943B).